The following is a 204-amino-acid chain: Holliday junction branch migration complex subunit RuvA (204 aa).

Residues 1 to 64 are domain I; sequence MIGRLCGTAE…EDAITLFGFI (64 aa). The segment at 65 to 143 is domain II; it reads DAAERDWFRL…AMPTGSAFIP (79 aa). Residues 144–154 are flexible linker; sequence TGTAPPVAPPQ. The tract at residues 154 to 204 is domain III; that stretch reads QGKLADALSALVNLGYRRAEAEAALSAVQAEAGEDAALDELIRGGLRRLAR.

This sequence belongs to the RuvA family. In terms of assembly, homotetramer. Forms an RuvA(8)-RuvB(12)-Holliday junction (HJ) complex. HJ DNA is sandwiched between 2 RuvA tetramers; dsDNA enters through RuvA and exits via RuvB. An RuvB hexamer assembles on each DNA strand where it exits the tetramer. Each RuvB hexamer is contacted by two RuvA subunits (via domain III) on 2 adjacent RuvB subunits; this complex drives branch migration. In the full resolvosome a probable DNA-RuvA(4)-RuvB(12)-RuvC(2) complex forms which resolves the HJ.

It localises to the cytoplasm. Its function is as follows. The RuvA-RuvB-RuvC complex processes Holliday junction (HJ) DNA during genetic recombination and DNA repair, while the RuvA-RuvB complex plays an important role in the rescue of blocked DNA replication forks via replication fork reversal (RFR). RuvA specifically binds to HJ cruciform DNA, conferring on it an open structure. The RuvB hexamer acts as an ATP-dependent pump, pulling dsDNA into and through the RuvAB complex. HJ branch migration allows RuvC to scan DNA until it finds its consensus sequence, where it cleaves and resolves the cruciform DNA. The protein is Holliday junction branch migration complex subunit RuvA of Acidiphilium cryptum (strain JF-5).